The sequence spans 156 residues: Snaclec rhinocetin subunit alpha (156 aa).

The N-terminal stretch at 1 to 23 is a signal peptide; sequence MGRFIFLSSGWLVVFLSLSGTGA. 3 cysteine pairs are disulfide-bonded: cysteine 27–cysteine 38, cysteine 55–cysteine 150, and cysteine 125–cysteine 142. Positions 34–151 constitute a C-type lectin domain; sequence YEGHCYKFFF…CGDNYPFVCM (118 aa).

It belongs to the snaclec family. In terms of assembly, heterodimer; disulfide-linked. As to expression, expressed by the venom gland.

Its subcellular location is the secreted. Antagonist of the alpha-2 subunit of the integrin alpha-2/beta-1 (ITGA2/ITGB1) on human platelets and endothelial cells. This protein inhibits collagen-stimulated activation of human platelets in a dose-dependent manner. In addition, it antagonizes the binding of monoclonal antibodies against the alpha-2 subunit of integrin alpha-2/beta-1 to platelets and it coimmunoprecipitates with this integrin. This is Snaclec rhinocetin subunit alpha from Bitis rhinoceros (West African gaboon viper).